The sequence spans 77 residues: Defensin-like protein 159 (77 aa).

The N-terminal stretch at 1–27 (MAKLSCSYFLVLILVFSAFLMVERAEG) is a signal peptide. Intrachain disulfides connect cysteine 30/cysteine 77, cysteine 40/cysteine 59, cysteine 45/cysteine 71, and cysteine 49/cysteine 73.

It belongs to the DEFL family.

It is found in the secreted. The protein is Defensin-like protein 159 (LCR25) of Arabidopsis thaliana (Mouse-ear cress).